We begin with the raw amino-acid sequence, 486 residues long: MAITNKLIITLLLLISIAVVHCLSFRVEIDEFEPPQQGEQEGPRRRPGGGSGEGWEEESTNHPYHFRKRSFSDWFQSKEGFVRVLPKFTKHAPALFRGIENYRFSLVEMEPTTFFVPHHLDADAVFIVLQGKGVIEFVTDKTKESFHITKGDVVRIPSGVTNFITNTNQTVPLRLAQITVPVNNPGNYKDYFPAASQFQQSYFNGFTKEVLSTSFNVPEELLGRLVTRSKEIGQGIIRRISPDQIKELAEHATSPSNKHKAKKEKEEDKDLRTLWTPFNLFAIDPIYSNDFGHFHEAHPKNYNQLQDLHIAAAWANMTQGSLFLPHFNSKTTFVTFVENGCARFEMATPYKFQRGQQQWPGQGQEEEEDMSENVHKVVSRVCKGEVFIVPAGHPFTILSQDQDFIAVGFGIYATNSKRTFLAGEENLLSNLNPAATRVTFGVGSKVAEKLFTSQNYSYFAPTSRSQQQIPEKHKPSFQSILDFAGF.

The N-terminal stretch at 1-22 (MAITNKLIITLLLLISIAVVHC) is a signal peptide. The segment at 34–60 (PPQQGEQEGPRRRPGGGSGEGWEEEST) is disordered. Cupin type-1 domains follow at residues 64–223 (YHFR…ELLG) and 278–448 (FNLF…KVAE). N-linked (GlcNAc...) asparagine glycosylation is found at Asn-168, Asn-316, and Asn-455.

It belongs to the 7S seed storage protein family. As to expression, predominantly expressed in the embryo and endosperm of developing seeds. Also present in seedlings.

Seed storage protein. Functionally, (Microbial infection) Involved in tobacco mosaic virus (TMV) replication. Required for endoplasmic reticulum (ER) aggregations mediated by TMV main replicase (P126) upon viral infection. The protein is Vicilin-like seed storage protein At3g22640 of Arabidopsis thaliana (Mouse-ear cress).